Here is a 125-residue protein sequence, read N- to C-terminus: MASNTSFLFVTVTLLLVLNVSSRALPPVADSTNIAARLTGGGLMQCWDALYELKSCTNEIVLFFLNGETKLGYGCCNAVDVITTDCWPAMLTSLGFTLEETNVLRGFCQSPNSGGSSPALSPVKL.

The signal sequence occupies residues 1-24 (MASNTSFLFVTVTLLLVLNVSSRA).

This sequence belongs to the plant egg cell-secreted peptide family. In terms of tissue distribution, restricted to female reproductive tissues, specifically accumulating in storage vesicles of the unfertilized egg cell.

The protein resides in the cytoplasmic vesicle. The protein localises to the secreted. Its function is as follows. Involved in the regulation of gamete interactions during the double fertilization and to prevent multiple-pollen tube attraction; mediates the redistribution of the gamete fusogen HAP2/GCS1 to the cell surface after secretion upon sperm arrival. The protein is Egg cell-secreted protein 1.3 (EC1.3) of Arabidopsis thaliana (Mouse-ear cress).